The following is a 659-amino-acid chain: Protein real-time (659 aa).

A PRELI/MSF1 domain is found at 3 to 175; sequence QKFQSPVRVY…FIGQLREEGI (173 aa). Residues 286-462 enclose the CRAL-TRIO domain; it reads KPAVVVEHFP…FLGGPCKTMI (177 aa). Residue Ser477 is modified to Phosphoserine. The 120-residue stretch at 512 to 631 folds into the GOLD domain; that stretch reads HRNLYKSVDL…QLNVFYEVLS (120 aa).

In terms of tissue distribution, restricted to the developing gut and central nervous system (CNS).

Its subcellular location is the mitochondrion. This Drosophila melanogaster (Fruit fly) protein is Protein real-time (retm).